The following is a 588-amino-acid chain: Cation channel sperm-associated protein 2 (588 aa).

Residues 1–106 lie on the Cytoplasmic side of the membrane; sequence MAQEQGHFQL…LWAGWVLDSS (106 aa). Residues 107–129 form a helical membrane-spanning segment; that stretch reads VFSKFIISLIFLNTFVLMVEIEL. Residues 130 to 138 are Extracellular-facing; sequence MESTNTALW. The chain crosses the membrane as a helical span at residues 139-164; that stretch reads PVKLALEVADWFILLSFIVEILLMWL. The Cytoplasmic segment spans residues 165 to 173; it reads ASFSLFWKD. The chain crosses the membrane as a helical span at residues 174 to 198; that stretch reads AWNVFDFFVTLLSLLPELVVLLGVP. Residues 199 to 201 lie on the Extracellular side of the membrane; that stretch reads AHS. The chain crosses the membrane as a helical span at residues 202–220; that stretch reads VWLQLLRVCRVLRSLKLFA. Residues 221 to 237 are Cytoplasmic-facing; the sequence is RFRQIKVILLALVRALK. Residues 238–260 traverse the membrane as a helical segment; the sequence is SMTFLLMLLLIFFYIFAVTGVYF. Residues 261–279 lie on the Extracellular side of the membrane; it reads FREYSRSTIEGLEYNMFFS. Positions 280-292 form an intramembrane region, helical; Pore-forming; it reads DLLNSLVTVFILF. The Extracellular segment spans residues 293-312; that stretch reads TLDHWYAVLQDIWKVPESSR. A helical membrane pass occupies residues 313-339; sequence VFSSIYVILWLLLGSIIFRNIIVAMMV. The Cytoplasmic portion of the chain corresponds to 340 to 588; sequence TNFQNIRSEL…VQALMSFEDK (249 aa). Positions 376–512 are disordered; that stretch reads SESLRGTSLG…YPVSHSISSH (137 aa). Over residues 390 to 439 the composition is skewed to acidic residues; the sequence is DIIETSDASDDDDDDDDDDDDDDDDDDDKSDATESDNEESDSENSESENS. The segment covering 440-502 has biased composition (basic and acidic residues); the sequence is ESEKIDPEKD…KVKEESKEKA (63 aa).

It belongs to the cation channel sperm-associated (TC 1.A.1.19) family. Component of the CatSper complex or CatSpermasome composed of the core pore-forming members CATSPER1, CATSPER2, CATSPER3 and CATSPER4 as well as auxiliary members CATSPERB, CATSPERG2, CATSPERD, CATSPERE, CATSPERZ, C2CD6/CATSPERT, SLCO6C1, TMEM249, TMEM262 and EFCAB9. HSPA1 may be an additional auxiliary complex member. The core complex members CATSPER1, CATSPER2, CATSPER3 and CATSPER4 form a heterotetrameric channel. The auxiliary CATSPERB, CATSPERG2, CATSPERD and CATSPERE subunits form a pavilion-like structure over the pore which stabilizes the complex through interactions with CATSPER4, CATSPER3, CATSPER1 and CATSPER2 respectively. SLCO6C1 interacts with CATSPERE and TMEM262/CATSPERH interacts with CATSPERB, further stabilizing the complex. C2CD6/CATSPERT interacts at least with CATSPERD and is required for targeting the CatSper complex in the flagellar membrane. Interacts with Ca(v)3.3/CACNA1I, leading to suppression of T-type calcium channel activity. Testis-specific.

The protein resides in the cell projection. Its subcellular location is the cilium. It is found in the flagellum membrane. The enzyme catalyses Ca(2+)(in) = Ca(2+)(out). With respect to regulation, in contrast to the human ortholog, not activated by progesterone. Activated by intracellular alkalinization. In terms of biological role, pore-forming subunit of the CatSper complex, a sperm-specific voltage-gated calcium channel that plays a central role in sperm cell hyperactivation. Controls calcium entry to mediate the hyperactivated motility, a step needed for sperm motility which is essential late in the preparation of sperm for fertilization. The protein is Cation channel sperm-associated protein 2 (Catsper2) of Mus musculus (Mouse).